The sequence spans 490 residues: Betaine aldehyde dehydrogenase (490 aa).

Positions 27 and 93 each coordinate K(+). 150-152 (GAW) lines the NAD(+) pocket. Residue lysine 162 is the Charge relay system of the active site. 176–179 (KPSE) contacts NAD(+). Residue valine 180 participates in K(+) binding. Residue 230-233 (GTTT) coordinates NAD(+). Position 246 (leucine 246) interacts with K(+). Glutamate 252 acts as the Proton acceptor in catalysis. Residues glycine 254, cysteine 286, and glutamate 387 each coordinate NAD(+). The active-site Nucleophile is cysteine 286. Cysteine 286 carries the cysteine sulfenic acid (-SOH) modification. Residues lysine 457 and glycine 460 each contribute to the K(+) site. The Charge relay system role is filled by glutamate 464.

This sequence belongs to the aldehyde dehydrogenase family. In terms of assembly, dimer of dimers. K(+) is required as a cofactor.

The catalysed reaction is betaine aldehyde + NAD(+) + H2O = glycine betaine + NADH + 2 H(+). The protein operates within amine and polyamine biosynthesis; betaine biosynthesis via choline pathway; betaine from betaine aldehyde: step 1/1. Involved in the biosynthesis of the osmoprotectant glycine betaine. Catalyzes the irreversible oxidation of betaine aldehyde to the corresponding acid. The chain is Betaine aldehyde dehydrogenase from Pseudomonas putida (strain GB-1).